A 1506-amino-acid chain; its full sequence is Transient receptor potential cation channel subfamily M member 2 (1506 aa).

Residues 1-11 (MESLDRRRTGS) show a composition bias toward basic and acidic residues. Residues 1 to 22 (MESLDRRRTGSEQEEGFGVQSR) are disordered. Topologically, residues 1–750 (MESLDRRRTG…WWGQLCVDNG (750 aa)) are cytoplasmic. Residues T173, N178, R301, G332, and T335 each contribute to the ADP-D-ribose site. The residue at position 738 (T738) is a Phosphothreonine. The stretch at 751–767 (LWRIILCMLAFPLLFTG) is an intramembrane region. At 768 to 792 (FISFREKRLQALCRPARVRAFFNAP) the chain is on the cytoplasmic side. A helical membrane pass occupies residues 793 to 813 (VVIFHMNILSYFAFLCLFAYV). The Extracellular portion of the chain corresponds to 814 to 824 (LMVDFQPSPSW). A helical membrane pass occupies residues 825–845 (CEYLIYLWLFSLVCEETRQLF). Residues E840 and Q843 each coordinate Ca(2+). Residues 846 to 864 (YDPDGCGLMKMASLYFSDF) lie on the Cytoplasmic side of the membrane. Residues 865–885 (WNKLDVGAILLFIVGLTCRLI) form a helical membrane-spanning segment. N866 provides a ligand contact to Ca(2+). Topologically, residues 886 to 893 (PATLYPGR) are extracellular. Residues 894 to 914 (IILSLDFIMFCLRLMHIFTIS) form a helical membrane-spanning segment. Over 915 to 926 (KTLGPKIIIVKR) the chain is Cytoplasmic. Residues 927–947 (MMKDVFFFLFLLAVWVVSFGV) form a helical membrane-spanning segment. At 948-967 (AKQAILIHNESRVDWIFRGV) the chain is on the extracellular side. The segment at residues 968-982 (VYHSYLTIFGQIPTY) is an intramembrane region (pore-forming). The short motif at 976 to 979 (FGQI) is the Selectivity filter element. Topologically, residues 983–1019 (IDGVNFSMDQCSPNGTDPYKPKCPESDWTGQAPAFPE) are extracellular. A disulfide bridge links C993 with C1005. Residues 1020–1041 (WLTVTLLCLYLLFANILLLNLL) form a helical membrane-spanning segment. The Cytoplasmic segment spans residues 1042-1076 (IAMFNYTFQEVQEHTDQIWKFQRHDLIEEYHGRPP). E1070 provides a ligand contact to Ca(2+). Residues 1077-1095 (APPPLILLSHLQLLIKRIV) lie within the membrane without spanning it. The Cytoplasmic portion of the chain corresponds to 1096-1506 (LKIPAKRHKQ…KVASLFGAHF (411 aa)). The 152-residue stretch at 1350–1501 (RWKRNQGGAI…KTILQKVASL (152 aa)) folds into the Nudix hydrolase domain. S1378 contributes to the ADP-D-ribose binding site. The short motif at 1386 to 1407 (GSREPGEMLPRKLKRVLRQEFW) is the Nudix box element. The ADP-D-ribose site is built by D1427, R1429, Y1488, and N1490.

The protein belongs to the transient receptor (TC 1.A.4) family. LTrpC subfamily. TRPM2 sub-subfamily. In terms of assembly, homotetramer. In terms of processing, protein kinase C (PKC)-mediated phosphorylation of TRPM2 at Thr-738 counteracts the effect of cytosolic Ca(2+) and elevates the temperature threshold. Detected in the preoptic area of the hypothalamus, a brain area involved in body temperature control. Detected in beta-cells in pancreas islets (at protein level). Detected in brain cortex, striatum, hippocampus CA1, CA2 and CA3 layers, and in the Purkinje cell layer in cerebellum. Widely expressed, with highest levels in lung, spleen, eye and brain. Detected in dendritic cells and in polymorphonuclear neutrophils.

The protein resides in the cell membrane. The protein localises to the perikaryon. It localises to the cell projection. It is found in the cytoplasmic vesicle. Its subcellular location is the lysosome. The enzyme catalyses Ca(2+)(in) = Ca(2+)(out). The catalysed reaction is Na(+)(in) = Na(+)(out). Activated by intracellular ADP-ribose, beta-NAD (NAD(+)) and similar compounds, and by oxidative stress caused by reactive oxygen or nitrogen species. Ca(2+) and PI(4,5)P2 are required for channel opening by ADP-ribose. Activated by moderate heat (35 to 40 degrees Celsius). Activation by ADP-ribose and beta-NAD is strongly increased by moderate heat (35 to 40 degrees Celsius). Likewise, reactive oxygen species lower the threshold for activation by moderate heat (37 degrees Celsius). Inactivated by exposure to extracellular pH between 4.0 and 6.5; irreversibly inactivated when open channels are exposed to extracellular pH between 4.0 and 6.5, while pre-exposure of closed channels to extracellular pH 5.5 gives rise to currents that rapidly inactivate, but protects against irreversible inactivation. Inactivated by intracellular ATP. Activated by arachidonic acid. Inhibited by 2-aminoethyl diphenylborinate (2-APB). Nonselective, voltage-independent cation channel that mediates Na(+) and Ca(2+) influx, leading to increased cytoplasmic Ca(2+) levels. Functions as a ligand-gated ion channel, gated by intracellular adenosine diphosphate ribose (ADP-ribose), Ca(2+), warm temperature, and oxidative stress. The precise physiological activators are under debate; the true, physiological activators may be ADP-ribose and ADP-ribose-2'-phosphate. Binding of ADP-ribose to the cytoplasmic Nudix domain causes a conformation change; the channel is primed but still requires Ca(2+) binding to trigger channel opening. Extracellular Ca(2+) passes through the channel and increases channel activity. Also contributes to Ca(2+) release from intracellular stores in response to ADP-ribose. Plays a role in numerous processes that involve signaling via intracellular Ca(2+) levels. Besides, mediates the release of lysosomal Zn(2+) stores in response to reactive oxygen species, leading to increased cytosolic Zn(2+) levels. Plays a role in mediating behavorial and physiological responses to moderate heat and thereby contributes to body temperature homeostasis. Plays a role in insulin secretion, a process that requires increased cytoplasmic Ca(2+) levels. Required for normal IFNG and cytokine secretion and normal innate immune immunity in response to bacterial infection. Required for normal phagocytosis and cytokine release by macrophages exposed to zymosan (in vitro). Plays a role in dendritic cell differentiation and maturation, and in dendritic cell chemotaxis via its role in regulating cytoplasmic Ca(2+) levels. Plays a role in the regulation of the reorganization of the actin cytoskeleton and filopodia formation in response to reactive oxygen species via its function in increasing cytoplasmic Ca(2+) and Zn(2+) levels. Confers susceptibility to cell death following oxidative stress. The sequence is that of Transient receptor potential cation channel subfamily M member 2 (Trpm2) from Mus musculus (Mouse).